Reading from the N-terminus, the 542-residue chain is 4-coumarate--CoA ligase-like 1 (542 aa).

ATP-binding residues include Ser189, Ser190, Gly191, Thr192, Thr193, and Lys197. Tyr237 is a (E)-4-coumaroyl-AMP binding site. Arg258 provides a ligand contact to CoA. The tract at residues 260 to 331 is SBD1; the sequence is DLRIFLNALI…AKFPNVQVQE (72 aa). (E)-4-coumaroyl-AMP is bound by residues Ala309, Glu331, Ala332, and Thr336. ATP contacts are provided by Glu331, Ala332, Thr336, Asp420, and Arg435. The interval 332 to 399 is SBD2; it reads AYGLTEHSCI…VRSQCVMQGY (68 aa). (E)-4-coumaroyl-AMP is bound by residues Lys437 and Lys441. Lys443 and Gly444 together coordinate CoA. ATP is bound at residue Lys526.

Belongs to the ATP-dependent AMP-binding enzyme family. Interacts with TKPR1, PKSA and PKSB. Mg(2+) serves as cofactor. In terms of tissue distribution, mostly confined to anther tapetal cells.

Its subcellular location is the endoplasmic reticulum. The catalysed reaction is (E)-4-coumarate + ATP + CoA = (E)-4-coumaroyl-CoA + AMP + diphosphate. It carries out the reaction (E)-4-coumarate + ATP + H(+) = (E)-4-coumaroyl-AMP + diphosphate. The enzyme catalyses (E)-4-coumaroyl-AMP + CoA = (E)-4-coumaroyl-CoA + AMP + H(+). In terms of biological role, carboxylate--CoA ligase that may use 4-coumarate as substrate. Follows a two-step reaction mechanism, wherein the carboxylate substrate first undergoes adenylation by ATP, followed by a thioesterification in the presence of CoA to yield the final CoA thioester. This Arabidopsis thaliana (Mouse-ear cress) protein is 4-coumarate--CoA ligase-like 1.